A 143-amino-acid chain; its full sequence is Hemoglobin subunit alpha-A (143 aa).

Residues 2 to 143 (SLSGKDKSVV…LALALAERYR (142 aa)) enclose the Globin domain. Residue His60 coordinates O2. A heme b-binding site is contributed by His89.

Belongs to the globin family. As to quaternary structure, heterotetramer of two alpha chains and two beta chains. As to expression, red blood cells.

Its function is as follows. Involved in oxygen transport from gills to the various peripheral tissues. This is Hemoglobin subunit alpha-A (hbaa) from Seriola quinqueradiata (Five-ray yellowtail).